Reading from the N-terminus, the 201-residue chain is Retinol-binding protein 4 (201 aa).

The N-terminal stretch at 1-18 (MKWVWALLLLAALGSGRA) is a signal peptide. Intrachain disulfides connect Cys-22-Cys-178, Cys-88-Cys-192, and Cys-138-Cys-147. Substrate is bound at residue Gln-116. Omega-N-methylarginine is present on Arg-139.

It belongs to the calycin superfamily. Lipocalin family. Interacts with TTR. Interaction with TTR prevents its loss by filtration through the kidney glomeruli. Interacts with STRA6. In terms of tissue distribution, detected in blood plasma and in urine (at protein level).

Its subcellular location is the secreted. In terms of biological role, retinol-binding protein that mediates retinol transport in blood plasma. Delivers retinol from the liver stores to the peripheral tissues. Transfers the bound all-trans retinol to STRA6, that then facilitates retinol transport across the cell membrane. This is Retinol-binding protein 4 (RBP4) from Homo sapiens (Human).